Here is a 107-residue protein sequence, read N- to C-terminus: High mobility group protein HMG-I/HMG-Y (107 aa).

The span at 1–13 (MSESGSKSSQPLA) shows a compositional bias: polar residues. Residues 1–107 (MSESGSKSSQ…ISQESSEEEQ (107 aa)) are disordered. At serine 2 the chain carries N-acetylserine. At lysine 7 the chain carries N6-acetyllysine. Serine 8 carries the post-translational modification ADP-ribosylserine. Position 9 is an ADP-ribosylserine; alternate (serine 9). Serine 9 carries the post-translational modification Phosphoserine; alternate. N6-acetyllysine; alternate is present on lysine 15. Lysine 15 is covalently cross-linked (Glycyl lysine isopeptide (Lys-Gly) (interchain with G-Cter in SUMO2); alternate). Residues 15–24 (KQEKDGTEKR) are compositionally biased toward basic and acidic residues. The segment at residues 21–31 (TEKRGRGRPRK) is a DNA-binding region (a.T hook 1). Arginine 26 carries the post-translational modification Asymmetric dimethylarginine; alternate. An Omega-N-methylarginine; alternate modification is found at arginine 26. A Symmetric dimethylarginine; alternate modification is found at arginine 26. Serine 36 carries the phosphoserine; by HIPK2 and CDC2 modification. A Phosphothreonine modification is found at threonine 39. Phosphoserine is present on residues serine 44 and serine 49. Threonine 53 is subject to Phosphothreonine; by HIPK2 and CDC2. DNA-binding regions (a.T hook) lie at residues 53-63 (TPKRPRGRPKG) and 78-89 (APGRKPRGRPKK). The interval 53–77 (TPKRPRGRPKGSKNKGAAKTRKVTT) is interaction with HIPK2. A compositionally biased stretch (basic residues) spans 55-74 (KRPRGRPKGSKNKGAAKTRK). Asymmetric dimethylarginine; by PRMT6; alternate is present on residues arginine 58 and arginine 60. Arginine 58 and arginine 60 each carry omega-N-methylarginine; by PRMT6; alternate. A compositionally biased stretch (acidic residues) spans 93-107 (EEEEGISQESSEEEQ). Serine 99, serine 102, and serine 103 each carry phosphoserine.

Belongs to the HMGA family. In terms of assembly, interacts with HIPK2. Isoforms HMG-I and HMG-Y can be phosphorylated by HIPK2. Phosphorylation may modulate DNA-binding affinity. Post-translationally, methylation at Arg-58 is mutually exclusive with methylation at Arg-60.

It is found in the nucleus. The protein resides in the chromosome. In terms of biological role, HMG-I/Y bind preferentially to the minor groove of A+T rich regions in double-stranded DNA. It is suggested that these proteins could function in nucleosome phasing and in the 3'-end processing of mRNA transcripts. They are also involved in the transcription regulation of genes containing, or in close proximity to A+T-rich regions. This chain is High mobility group protein HMG-I/HMG-Y (Hmga1), found in Mus musculus (Mouse).